The following is a 190-amino-acid chain: Potassium-transporting ATPase KdpC subunit (190 aa).

Residues 10–30 (VLFAVLTLICGVIYPYAITGI) form a helical membrane-spanning segment.

It belongs to the KdpC family. In terms of assembly, the system is composed of three essential subunits: KdpA, KdpB and KdpC.

It is found in the cell inner membrane. Functionally, part of the high-affinity ATP-driven potassium transport (or Kdp) system, which catalyzes the hydrolysis of ATP coupled with the electrogenic transport of potassium into the cytoplasm. This subunit acts as a catalytic chaperone that increases the ATP-binding affinity of the ATP-hydrolyzing subunit KdpB by the formation of a transient KdpB/KdpC/ATP ternary complex. The chain is Potassium-transporting ATPase KdpC subunit from Herminiimonas arsenicoxydans.